A 179-amino-acid polypeptide reads, in one-letter code: Large ribosomal subunit protein uL5 (179 aa).

This sequence belongs to the universal ribosomal protein uL5 family. Part of the 50S ribosomal subunit; part of the 5S rRNA/L5/L18/L25 subcomplex. Contacts the 5S rRNA and the P site tRNA. Forms a bridge to the 30S subunit in the 70S ribosome.

In terms of biological role, this is one of the proteins that bind and probably mediate the attachment of the 5S RNA into the large ribosomal subunit, where it forms part of the central protuberance. In the 70S ribosome it contacts protein S13 of the 30S subunit (bridge B1b), connecting the 2 subunits; this bridge is implicated in subunit movement. Contacts the P site tRNA; the 5S rRNA and some of its associated proteins might help stabilize positioning of ribosome-bound tRNAs. The polypeptide is Large ribosomal subunit protein uL5 (Enterobacter sp. (strain 638)).